A 240-amino-acid chain; its full sequence is Ribosomal RNA small subunit methyltransferase J (240 aa).

Residues 93 to 94 (RD) and D162 each bind S-adenosyl-L-methionine.

It belongs to the methyltransferase superfamily. RsmJ family.

It is found in the cytoplasm. The enzyme catalyses guanosine(1516) in 16S rRNA + S-adenosyl-L-methionine = N(2)-methylguanosine(1516) in 16S rRNA + S-adenosyl-L-homocysteine + H(+). Specifically methylates the guanosine in position 1516 of 16S rRNA. The protein is Ribosomal RNA small subunit methyltransferase J of Francisella philomiragia subsp. philomiragia (strain ATCC 25017 / CCUG 19701 / FSC 153 / O#319-036).